Reading from the N-terminus, the 245-residue chain is 4-hydroxy-tetrahydrodipicolinate reductase (245 aa).

NAD(+) contacts are provided by residues 8–13 (GSTGKM), 78–80 (GTT), and 102–105 (SANM). The active-site Proton donor/acceptor is His-134. Position 135 (His-135) interacts with (S)-2,3,4,5-tetrahydrodipicolinate. The active-site Proton donor is the Lys-138. Residue 144-145 (GT) participates in (S)-2,3,4,5-tetrahydrodipicolinate binding.

It belongs to the DapB family.

Its subcellular location is the cytoplasm. It catalyses the reaction (S)-2,3,4,5-tetrahydrodipicolinate + NAD(+) + H2O = (2S,4S)-4-hydroxy-2,3,4,5-tetrahydrodipicolinate + NADH + H(+). The catalysed reaction is (S)-2,3,4,5-tetrahydrodipicolinate + NADP(+) + H2O = (2S,4S)-4-hydroxy-2,3,4,5-tetrahydrodipicolinate + NADPH + H(+). Its pathway is amino-acid biosynthesis; L-lysine biosynthesis via DAP pathway; (S)-tetrahydrodipicolinate from L-aspartate: step 4/4. Catalyzes the conversion of 4-hydroxy-tetrahydrodipicolinate (HTPA) to tetrahydrodipicolinate. This Rickettsia akari (strain Hartford) protein is 4-hydroxy-tetrahydrodipicolinate reductase.